A 461-amino-acid polypeptide reads, in one-letter code: MTPNSMTENGLPAWDKQKPRPDRGQDWKLVGMSEACLHRKSHVERRGALKNEQTSPHLIQATWTSSIFHLDPDDVNDQSISSAQTFQTEEKKCKGYIPSYLDKDELCVVCGDKATGYHYRCITCEGCKGFFRRTIQKSLHPSYSCKYEGKCIIDKVTRNQCQECRFKKCIYVGMATDLVLDDSKRLAKRKLIEENREKRRREELQKSIGHKPEPTDEEWELIKTVTEAHVATNAQGSHWKQKRKFLPEDIGQAPIVNAPEGGKVDLEAFSHFTKIITPAITRVVDFAKKLPMFCELPCEDQIILLKGCCMEIMSLRAAVRYDPDSETLTLNGEMAVTRGQLKNGGLGVVSDAIFDLGMSLSSFNLDDTEVALLQAVLLMSSDRPGLACVERIEKYQDSFLLAFEHYINYRKHHVTHFWPKLLMKVTDLRMIGACHASRFLHMKVECPTELFPPLFLEVFED.

Residues Met-1–Gly-24 form a disordered region. Residues Met-1–Leu-106 form a modulating region. The span at Asp-15–Gly-24 shows a compositional bias: basic and acidic residues. Cys-107, Cys-110, Cys-124, Cys-127, Cys-145, Cys-151, Cys-161, and Cys-164 together coordinate Zn(2+). 2 consecutive NR C4-type zinc fingers follow at residues Cys-107–Cys-127 and Cys-145–Cys-169. A DNA-binding region (nuclear receptor) is located at residues Cys-107–Asp-181. The NR LBD domain occupies Glu-217–Asp-461. Positions Lys-244–Asp-461 are interaction with NR2F6. Positions 282, 331, and 435 each coordinate 3,3',5-triiodo-L-thyronine. 3 residues coordinate L-thyroxine: Arg-282, Asn-331, and His-435.

This sequence belongs to the nuclear hormone receptor family. NR1 subfamily. As to quaternary structure, binds DNA as a dimer; homodimer and heterodimer with RXRB. Interacts with the coactivators NCOA1/SRC1, NCOA2/GRIP1, NCOA7 and MED1/TRAP220 in a ligand-inducible manner. Interacts with the corepressor NCOR1 in absence of ligand. Interacts with C1D. Interacts with NR2F6; the interaction impairs the binding of the THRB homodimer and THRB:RXRB heterodimer to T3 response elements. Interacts with PRMT2 and THRSP. Interacts with TACC1; this interaction is decreased in the presence of thyroid hormone T3.

The protein localises to the nucleus. Its function is as follows. Nuclear hormone receptor that can act as a repressor or activator of transcription. High affinity receptor for thyroid hormones, including triiodothyronine and thyroxine. This chain is Thyroid hormone receptor beta (Thrb), found in Mus musculus (Mouse).